The chain runs to 129 residues: Small ribosomal subunit protein uS11 (129 aa).

The protein belongs to the universal ribosomal protein uS11 family. In terms of assembly, part of the 30S ribosomal subunit. Interacts with proteins S7 and S18. Binds to IF-3.

Functionally, located on the platform of the 30S subunit, it bridges several disparate RNA helices of the 16S rRNA. Forms part of the Shine-Dalgarno cleft in the 70S ribosome. The protein is Small ribosomal subunit protein uS11 of Xanthobacter autotrophicus (strain ATCC BAA-1158 / Py2).